Reading from the N-terminus, the 577-residue chain is Proline--tRNA ligase (577 aa).

It belongs to the class-II aminoacyl-tRNA synthetase family. ProS type 1 subfamily. Homodimer.

Its subcellular location is the cytoplasm. The catalysed reaction is tRNA(Pro) + L-proline + ATP = L-prolyl-tRNA(Pro) + AMP + diphosphate. In terms of biological role, catalyzes the attachment of proline to tRNA(Pro) in a two-step reaction: proline is first activated by ATP to form Pro-AMP and then transferred to the acceptor end of tRNA(Pro). As ProRS can inadvertently accommodate and process non-cognate amino acids such as alanine and cysteine, to avoid such errors it has two additional distinct editing activities against alanine. One activity is designated as 'pretransfer' editing and involves the tRNA(Pro)-independent hydrolysis of activated Ala-AMP. The other activity is designated 'posttransfer' editing and involves deacylation of mischarged Ala-tRNA(Pro). The misacylated Cys-tRNA(Pro) is not edited by ProRS. This chain is Proline--tRNA ligase, found in Janthinobacterium sp. (strain Marseille) (Minibacterium massiliensis).